A 248-amino-acid polypeptide reads, in one-letter code: Triosephosphate isomerase (248 aa).

9 to 11 (NWK) contacts substrate. His92 functions as the Electrophile in the catalytic mechanism. Glu164 acts as the Proton acceptor in catalysis. Substrate-binding positions include Gly170, Ser209, and 230–231 (GG).

It belongs to the triosephosphate isomerase family. As to quaternary structure, homodimer.

It localises to the cytoplasm. The enzyme catalyses D-glyceraldehyde 3-phosphate = dihydroxyacetone phosphate. Its pathway is carbohydrate biosynthesis; gluconeogenesis. It functions in the pathway carbohydrate degradation; glycolysis; D-glyceraldehyde 3-phosphate from glycerone phosphate: step 1/1. In terms of biological role, involved in the gluconeogenesis. Catalyzes stereospecifically the conversion of dihydroxyacetone phosphate (DHAP) to D-glyceraldehyde-3-phosphate (G3P). The polypeptide is Triosephosphate isomerase (Thiobacillus denitrificans (strain ATCC 25259 / T1)).